The chain runs to 256 residues: MDVIPAIDLLGGQCVRLFQGDYDQAEVYGKDPVGMALRWAEAGAQRLHLVDLDGAKEGSPVNAEAIATIAQRLSIPVQVGGGLRDRDTVARLLDSGVERAILGTVAVERPALVEALAGEFPGQIAVGIDARSGKVATRGWLEDSGLTAVALAQQMADLGACALICTDIGRDGTLQGPNLEELRAIAAAVSIPVIASGGVGSLTDLLSLLPLEAQGVSGVIVGKALYTGAVDLQEALRAIGSGRWQDVAVDDSSRLA.

Asp-8 acts as the Proton acceptor in catalysis. Asp-129 (proton donor) is an active-site residue.

It belongs to the HisA/HisF family.

The protein resides in the cytoplasm. The enzyme catalyses 1-(5-phospho-beta-D-ribosyl)-5-[(5-phospho-beta-D-ribosylamino)methylideneamino]imidazole-4-carboxamide = 5-[(5-phospho-1-deoxy-D-ribulos-1-ylimino)methylamino]-1-(5-phospho-beta-D-ribosyl)imidazole-4-carboxamide. It functions in the pathway amino-acid biosynthesis; L-histidine biosynthesis; L-histidine from 5-phospho-alpha-D-ribose 1-diphosphate: step 4/9. The sequence is that of 1-(5-phosphoribosyl)-5-[(5-phosphoribosylamino)methylideneamino] imidazole-4-carboxamide isomerase from Synechococcus elongatus (strain ATCC 33912 / PCC 7942 / FACHB-805) (Anacystis nidulans R2).